Here is a 144-residue protein sequence, read N- to C-terminus: MKNNSAQKIIDSIKQILSIYKIDFEPSFGATLTDDNDLDYQMLIEKTQEKIQELDKRSQEILQQTGMTREQMEVFANNPDNFSPEEWRALENIRSSCNEYKKETEELIKEVTNDIGHSSHKSPTPKKTKSSSQKKSKKKNWIPL.

A disordered region spans residues 110–144 (EVTNDIGHSSHKSPTPKKTKSSSQKKSKKKNWIPL). A compositionally biased stretch (basic residues) spans 118-144 (SSHKSPTPKKTKSSSQKKSKKKNWIPL).

This sequence belongs to the chlamydial CPn_0742/CT_635/TC_0003 family.

The polypeptide is Protein CT_635 (Chlamydia trachomatis serovar D (strain ATCC VR-885 / DSM 19411 / UW-3/Cx)).